A 297-amino-acid polypeptide reads, in one-letter code: Phosphatidylglycerol--prolipoprotein diacylglyceryl transferase (297 aa).

3 helical membrane passes run 17-37, 59-79, and 97-117; these read LAVR…IVVG, MLFY…VLFY, and GGMS…LFAW. A 1,2-diacyl-sn-glycero-3-phospho-(1'-sn-glycerol) is bound at residue Arg142. Helical transmembrane passes span 230–250 and 257–277; these read MGAV…TVEF and FLGL…PMIV.

Belongs to the Lgt family.

Its subcellular location is the cell inner membrane. The catalysed reaction is L-cysteinyl-[prolipoprotein] + a 1,2-diacyl-sn-glycero-3-phospho-(1'-sn-glycerol) = an S-1,2-diacyl-sn-glyceryl-L-cysteinyl-[prolipoprotein] + sn-glycerol 1-phosphate + H(+). It functions in the pathway protein modification; lipoprotein biosynthesis (diacylglyceryl transfer). Functionally, catalyzes the transfer of the diacylglyceryl group from phosphatidylglycerol to the sulfhydryl group of the N-terminal cysteine of a prolipoprotein, the first step in the formation of mature lipoproteins. This is Phosphatidylglycerol--prolipoprotein diacylglyceryl transferase from Burkholderia multivorans (strain ATCC 17616 / 249).